The chain runs to 331 residues: Mitochondrial carrier protein CoAc1 (331 aa).

Helical transmembrane passes span 16 to 36 (LVDTLPVLAKTLIAGGAAGAI), 79 to 99 (FYKGNGASVIRIIPYAALHYM), 123 to 143 (LVAGSAAGGTAVLCTYPLDLA), 193 to 213 (GIGPTLIGILPYAGLKFYIYE), 231 to 251 (LPCGALAGLFGQTITYPLDVV), and 292 to 312 (FAGLSINYIKIVPSVAIGFTV). Solcar repeat units lie at residues 21–107 (PVLA…YRDW), 117–218 (SGPI…LKRH), and 225–319 (NSVR…MKSW).

It belongs to the mitochondrial carrier (TC 2.A.29) family. Expressed throughout the plant.

Its subcellular location is the mitochondrion inner membrane. Required for the accumulation of coenzyme A in the mitochondrial matrix. This is Mitochondrial carrier protein CoAc1 from Arabidopsis thaliana (Mouse-ear cress).